A 144-amino-acid polypeptide reads, in one-letter code: MKTFSPTPENINREWFVVDASDLVLGRLATQITHRLRGKHKPEFAPHMDNGDFIVVVNCEKIKVTGNKLADKKYYRHSGYVGGLHEITLEKLLASHPERVLMNAVRGMLPKNRLGRAMLKKLKVYAGPEHPHAAQNPQPLAIKY.

This sequence belongs to the universal ribosomal protein uL13 family. As to quaternary structure, part of the 50S ribosomal subunit.

In terms of biological role, this protein is one of the early assembly proteins of the 50S ribosomal subunit, although it is not seen to bind rRNA by itself. It is important during the early stages of 50S assembly. The protein is Large ribosomal subunit protein uL13 of Nitratidesulfovibrio vulgaris (strain DSM 19637 / Miyazaki F) (Desulfovibrio vulgaris).